The sequence spans 196 residues: Peptidyl-tRNA hydrolase (196 aa).

Tyr16 serves as a coordination point for tRNA. His21 serves as the catalytic Proton acceptor. Positions 67, 69, and 115 each coordinate tRNA.

This sequence belongs to the PTH family. In terms of assembly, monomer.

The protein localises to the cytoplasm. It catalyses the reaction an N-acyl-L-alpha-aminoacyl-tRNA + H2O = an N-acyl-L-amino acid + a tRNA + H(+). In terms of biological role, hydrolyzes ribosome-free peptidyl-tRNAs (with 1 or more amino acids incorporated), which drop off the ribosome during protein synthesis, or as a result of ribosome stalling. Functionally, catalyzes the release of premature peptidyl moieties from peptidyl-tRNA molecules trapped in stalled 50S ribosomal subunits, and thus maintains levels of free tRNAs and 50S ribosomes. This chain is Peptidyl-tRNA hydrolase, found in Edwardsiella ictaluri (strain 93-146).